The following is a 693-amino-acid chain: Elongation factor G (693 aa).

Residues His-8–Asp-284 enclose the tr-type G domain. GTP-binding positions include Ala-17–Thr-24, Asp-81–His-85, and Asn-135–Asp-138.

This sequence belongs to the TRAFAC class translation factor GTPase superfamily. Classic translation factor GTPase family. EF-G/EF-2 subfamily.

The protein resides in the cytoplasm. Functionally, catalyzes the GTP-dependent ribosomal translocation step during translation elongation. During this step, the ribosome changes from the pre-translocational (PRE) to the post-translocational (POST) state as the newly formed A-site-bound peptidyl-tRNA and P-site-bound deacylated tRNA move to the P and E sites, respectively. Catalyzes the coordinated movement of the two tRNA molecules, the mRNA and conformational changes in the ribosome. This chain is Elongation factor G, found in Nautilia profundicola (strain ATCC BAA-1463 / DSM 18972 / AmH).